Here is a 158-residue protein sequence, read N- to C-terminus: MASKSSFMATFNIVTLMLMVASSTVTARPLMKPSMGTSSPTTSLVYRLKLDEDTGYCWDSLMQLQHCSGELILFFLNGETYIGPGCCSAIRTIGRKCWPTMIGVLGFTAQEGDMLQGYCDGNDSDNNGEDHALASSTLPLSVNFKTTVVRSSASPSNP.

A signal peptide spans Met-1 to Ala-27. The N-linked (GlcNAc...) asparagine glycan is linked to Asn-122.

It belongs to the plant egg cell-secreted peptide family. In terms of tissue distribution, restricted to female reproductive tissues, specifically accumulating in storage vesicles of the unfertilized egg cell.

Its subcellular location is the cytoplasmic vesicle. The protein localises to the secreted. In terms of biological role, involved in the regulation of gamete interactions during the double fertilization and to prevent multiple-pollen tube attraction; mediates the redistribution of the gamete fusogen HAP2/GCS1 to the cell surface after secretion upon sperm arrival. The polypeptide is Egg cell-secreted protein 1.1 (EC1.1) (Arabidopsis thaliana (Mouse-ear cress)).